Reading from the N-terminus, the 102-residue chain is Large ribosomal subunit protein eL21 (102 aa).

The segment covering 1–21 has biased composition (basic residues); sequence MVRRSKGFRSRTRKKLRKKPR. The disordered stretch occupies residues 1-33; the sequence is MVRRSKGFRSRTRKKLRKKPRERGLSPLGPMTQ.

Belongs to the eukaryotic ribosomal protein eL21 family.

This is Large ribosomal subunit protein eL21 from Methanopyrus kandleri (strain AV19 / DSM 6324 / JCM 9639 / NBRC 100938).